Consider the following 369-residue polypeptide: Peptide chain release factor 2 (369 aa).

Gln-247 is subject to N5-methylglutamine.

The protein belongs to the prokaryotic/mitochondrial release factor family. Methylated by PrmC. Methylation increases the termination efficiency of RF2.

The protein resides in the cytoplasm. In terms of biological role, peptide chain release factor 2 directs the termination of translation in response to the peptide chain termination codons UGA and UAA. This is Peptide chain release factor 2 from Phenylobacterium zucineum (strain HLK1).